The primary structure comprises 914 residues: Probable UDP-N-acetylglucosamine--peptide N-acetylglucosaminyltransferase SPINDLY (914 aa).

The disordered stretch occupies residues 1–39; that stretch reads MVGLEDDTERERSPVVENGFSNGSRSSSSSAGVLSPSRK. Residues 19–37 show a composition bias toward low complexity; that stretch reads GFSNGSRSSSSSAGVLSPS. S35 carries the post-translational modification Phosphoserine. 11 TPR repeats span residues 43–76, 77–110, 112–144, 152–185, 186–219, 220–253, 261–294, 295–328, 329–362, 364–396, and 397–430; these read GNDTLSYANILRARNKFADALALYEAMLEKDSKN, VEAHIGKGICLQTQNKGNLAFDCFSEAIRLDPHN, CALTHCGILHKEEGRLVEAAESYQKALMADASY, AIVLTDLGTSLKLAGNTQEGIQKYYEALKIDPHY, APAYYNLGVVYSEMMQYDNALSCYEKAALERPMY, AEAYCNMGVIYKNRGDLEMAITCYERCLAVSPNF, AIALTDLGTKVKLEGDVTQGVAYYKKALYYNWHY, ADAMYNLGVAYGEMLKFDMAIVFYELAFHFNPHC, AEACNNLGVLYKDRDNLDKAVECYQMALSIKPNF, QSLNNLGVVYTVQGKMDAAASMIEKAILANPTY, and AEAFNNLGVLYRDAGNITMAIDAYEECLKIDPDS. Residues 431-914 are catalytic region; sequence RNAGQNRLLA…QLSKRMDSTS (484 aa). A disordered region spans residues 866-914; that stretch reads PLISKDLGPSRVSVTGEATPSLKANGSAPVPSSLPTQSPQLSKRMDSTS. Polar residues predominate over residues 877–889; that stretch reads VSVTGEATPSLKA. The span at 894-907 shows a compositional bias: low complexity; it reads PVPSSLPTQSPQLS.

This sequence belongs to the glycosyltransferase 41 family. O-GlcNAc transferase subfamily. In terms of assembly, homomultimer; via its TPR repeats. Interacts with GI. Interacts with TCP14 and TCP15. Interacts (via N-terminus) with APRR5. Interacts with CPN20. In terms of tissue distribution, widely expressed. Present throughout the plant (at protein level).

The protein resides in the cytoplasm. Its subcellular location is the nucleus. It catalyses the reaction L-seryl-[protein] + UDP-N-acetyl-alpha-D-glucosamine = 3-O-(N-acetyl-beta-D-glucosaminyl)-L-seryl-[protein] + UDP + H(+). The enzyme catalyses L-threonyl-[protein] + UDP-N-acetyl-alpha-D-glucosamine = 3-O-(N-acetyl-beta-D-glucosaminyl)-L-threonyl-[protein] + UDP + H(+). It carries out the reaction L-seryl-[protein] + GDP-beta-L-fucose = 3-O-(alpha-L-fucosyl)-L-seryl-[protein] + GDP + H(+). The catalysed reaction is L-threonyl-[protein] + GDP-beta-L-fucose = 3-O-(alpha-L-fucosyl)-L-threonyl-[protein] + GDP + H(+). It functions in the pathway protein modification; protein glycosylation. Functionally, probable O-linked N-acetylglucosamine transferase (OGT) involved in various processes such as gibberellin (GA) signaling pathway and circadian clock. OGTs catalyze the addition of nucleotide-activated sugars directly onto the polypeptide through O-glycosidic linkage with the hydroxyl of serine or threonine. Probably acts by adding O-linked sugars to yet unknown proteins. Acts as a repressor of GA signaling pathway to inhibit hypocotyl elongation. Functions with GIGANTEA (GI) in pathways controlling flowering, circadian cotyledon movements and hypocotyl elongation. Acts as a light-regulated promoter of elongation via its interaction with GI. Acts as an activator of cytokinin signaling. Required with SEC for gamete and seed development. Its OGT activity has been proved in vitro but not in vivo. Possesses O-fucosyltransferase activity on specific serine and threonine residues. Mediates O-fucosylation of the DELLA protein RGA, a repressor of the GA signaling pathway. O-fucosylation enhances RGA activity by promoting RGA binding to key transcription factors in brassinosteroid and light-signaling pathways. Regulates root hair patterning upstream of the transcription factor WER, independently of DELLA proteins and GA signaling. Involved in abscisic acid (ABA) signaling partly through functional ABAR. Mediates O-fucosylation of CPN20 that may depress ABA responses during seed germination and seedling development. Involved in the modulation of the pace of the circadian clock by mediating O-fucosylation of APRR5, one of the core circadian clock components. O-fucosylation promotes APRR5 proteolysis. The sequence is that of Probable UDP-N-acetylglucosamine--peptide N-acetylglucosaminyltransferase SPINDLY from Arabidopsis thaliana (Mouse-ear cress).